The primary structure comprises 396 residues: Putative nickel insertion protein (396 aa).

Residues Arg333–Val355 are disordered.

This sequence belongs to the LarC family.

The protein is Putative nickel insertion protein of Rhodopirellula baltica (strain DSM 10527 / NCIMB 13988 / SH1).